A 298-amino-acid polypeptide reads, in one-letter code: 4-diphosphocytidyl-2-C-methyl-D-erythritol kinase (298 aa).

Lys25 is a catalytic residue. 109 to 119 provides a ligand contact to ATP; sequence PVGGGFGGGSS. Residue Asp151 is part of the active site.

It belongs to the GHMP kinase family. IspE subfamily.

It carries out the reaction 4-CDP-2-C-methyl-D-erythritol + ATP = 4-CDP-2-C-methyl-D-erythritol 2-phosphate + ADP + H(+). It participates in isoprenoid biosynthesis; isopentenyl diphosphate biosynthesis via DXP pathway; isopentenyl diphosphate from 1-deoxy-D-xylulose 5-phosphate: step 3/6. Its function is as follows. Catalyzes the phosphorylation of the position 2 hydroxy group of 4-diphosphocytidyl-2C-methyl-D-erythritol. The chain is 4-diphosphocytidyl-2-C-methyl-D-erythritol kinase from Xylella fastidiosa (strain 9a5c).